The following is a 182-amino-acid chain: N-alpha-acetyltransferase daf-31 (182 aa).

Residues 1–152 (MNIRCARVDD…DAYAMRRDLA (152 aa)) enclose the N-acetyltransferase domain. Positions 162–182 (PADREAYTTAKTTDDKKKNRS) are disordered.

The protein belongs to the acetyltransferase family. ARD1 subfamily. Component of the N-terminal acetyltransferase A (NatA) complex. Expressed in head and tail hypodermal cells, hypodermal seam cells, pharynx, intestine and head and tail neurons.

It carries out the reaction N-terminal glycyl-[protein] + acetyl-CoA = N-terminal N(alpha)-acetylglycyl-[protein] + CoA + H(+). The catalysed reaction is N-terminal L-alanyl-[protein] + acetyl-CoA = N-terminal N(alpha)-acetyl-L-alanyl-[protein] + CoA + H(+). It catalyses the reaction N-terminal L-seryl-[protein] + acetyl-CoA = N-terminal N(alpha)-acetyl-L-seryl-[protein] + CoA + H(+). The enzyme catalyses N-terminal L-valyl-[protein] + acetyl-CoA = N-terminal N(alpha)-acetyl-L-valyl-[protein] + CoA + H(+). It carries out the reaction N-terminal L-cysteinyl-[protein] + acetyl-CoA = N-terminal N(alpha)-acetyl-L-cysteinyl-[protein] + CoA + H(+). The catalysed reaction is N-terminal L-threonyl-[protein] + acetyl-CoA = N-terminal N(alpha)-acetyl-L-threonyl-[protein] + CoA + H(+). Functionally, catalytic subunit of the N-terminal acetyltransferase A (NatA) complex which displays alpha (N-terminal) acetyltransferase activity. Plays a role in regulating larval development, metabolism and longevity. Functions downstream or alongside daf-3, daf-12 and daf-16 in the dauer formation pathway. Functions upstream of daf-15 to enable animal development. This is N-alpha-acetyltransferase daf-31 from Caenorhabditis elegans.